Consider the following 200-residue polypeptide: Protein GrpE (200 aa).

The span at 1–12 (MSNEEIKNKDEQ) shows a compositional bias: basic and acidic residues. A disordered region spans residues 1–30 (MSNEEIKNKDEQLQQDAVETEAEVVGTDAD).

The protein belongs to the GrpE family. As to quaternary structure, homodimer.

The protein localises to the cytoplasm. In terms of biological role, participates actively in the response to hyperosmotic and heat shock by preventing the aggregation of stress-denatured proteins, in association with DnaK and GrpE. It is the nucleotide exchange factor for DnaK and may function as a thermosensor. Unfolded proteins bind initially to DnaJ; upon interaction with the DnaJ-bound protein, DnaK hydrolyzes its bound ATP, resulting in the formation of a stable complex. GrpE releases ADP from DnaK; ATP binding to DnaK triggers the release of the substrate protein, thus completing the reaction cycle. Several rounds of ATP-dependent interactions between DnaJ, DnaK and GrpE are required for fully efficient folding. This chain is Protein GrpE, found in Vibrio cholerae serotype O1 (strain ATCC 39315 / El Tor Inaba N16961).